The chain runs to 101 residues: MSNSGNIKLINIGFGNIVSANRLIAIVSPDSAPIKRIIQEARERGMLIDATYGRRTRAVIITDSDHVILSAVQPETVAHRVIEPEEDFEEDIDVEDEVDKR.

Belongs to the RemA family.

This chain is Putative regulatory protein Csac_2087, found in Caldicellulosiruptor saccharolyticus (strain ATCC 43494 / DSM 8903 / Tp8T 6331).